The sequence spans 303 residues: N-acetyl-D-glucosamine kinase (303 aa).

ATP contacts are provided by residues 4–11 (GFDIGGTK) and 133–140 (GVGGGLIF). Residues H157, C177, C179, and C184 each coordinate Zn(2+).

The protein belongs to the ROK (NagC/XylR) family. NagK subfamily.

The catalysed reaction is N-acetyl-D-glucosamine + ATP = N-acetyl-D-glucosamine 6-phosphate + ADP + H(+). It participates in cell wall biogenesis; peptidoglycan recycling. In terms of biological role, catalyzes the phosphorylation of N-acetyl-D-glucosamine (GlcNAc) derived from cell-wall degradation, yielding GlcNAc-6-P. The polypeptide is N-acetyl-D-glucosamine kinase (Escherichia coli O139:H28 (strain E24377A / ETEC)).